A 192-amino-acid polypeptide reads, in one-letter code: Ras-like protein 2 (192 aa).

12–19 is a GTP binding site; it reads GGGGVGKS. Residues 34 to 42 carry the Effector region motif; the sequence is YDPTIEDSY. The S-palmitoyl cysteine moiety is linked to residue Cys-46. GTP-binding positions include 59–63 and 118–121; these read DTAGQ and NKCD. 2 S-palmitoyl cysteine lipidation sites follow: Cys-120 and Cys-147. Cys-189 carries the post-translational modification Cysteine methyl ester. Residue Cys-189 is the site of S-farnesyl cysteine attachment. The propeptide at 190-192 is removed in mature form; that stretch reads CLM.

The protein belongs to the small GTPase superfamily. Ras family. As to quaternary structure, interacts with hzg.

It is found in the cell membrane. It catalyses the reaction GTP + H2O = GDP + phosphate + H(+). Alternates between an inactive form bound to GDP and an active form bound to GTP. Activated by a guanine nucleotide-exchange factor (GEF) and inactivated by a GTPase-activating protein (GAP). In terms of biological role, may be involved in endocytic processes and/or other transport pathways mediated by vesicle trafficking. May interact functionally with ROP protein. Ras proteins bind GDP/GTP and possess intrinsic GTPase activity. The protein is Ras-like protein 2 (Ras64B) of Drosophila melanogaster (Fruit fly).